Here is a 156-residue protein sequence, read N- to C-terminus: Transcription elongation factor GreA (156 aa).

A coiled-coil region spans residues 45-66; that stretch reads NAEYHSAKEKQSFIEGRIKELE.

Belongs to the GreA/GreB family.

Functionally, necessary for efficient RNA polymerase transcription elongation past template-encoded arresting sites. The arresting sites in DNA have the property of trapping a certain fraction of elongating RNA polymerases that pass through, resulting in locked ternary complexes. Cleavage of the nascent transcript by cleavage factors such as GreA or GreB allows the resumption of elongation from the new 3'terminus. GreA releases sequences of 2 to 3 nucleotides. This Jannaschia sp. (strain CCS1) protein is Transcription elongation factor GreA.